Here is a 460-residue protein sequence, read N- to C-terminus: Histidinol dehydrogenase (460 aa).

Substrate-binding residues include serine 269, glutamine 291, and histidine 294. Residues glutamine 291 and histidine 294 each coordinate Zn(2+). Catalysis depends on proton acceptor residues glutamate 358 and histidine 359. Substrate contacts are provided by histidine 359, aspartate 392, glutamate 446, and histidine 451. Position 392 (aspartate 392) interacts with Zn(2+). Histidine 451 is a binding site for Zn(2+).

This sequence belongs to the histidinol dehydrogenase family. Zn(2+) is required as a cofactor.

It carries out the reaction L-histidinol + 2 NAD(+) + H2O = L-histidine + 2 NADH + 3 H(+). The protein operates within amino-acid biosynthesis; L-histidine biosynthesis; L-histidine from 5-phospho-alpha-D-ribose 1-diphosphate: step 9/9. Its function is as follows. Catalyzes the sequential NAD-dependent oxidations of L-histidinol to L-histidinaldehyde and then to L-histidine. The polypeptide is Histidinol dehydrogenase (Rhodopirellula baltica (strain DSM 10527 / NCIMB 13988 / SH1)).